Here is a 145-residue protein sequence, read N- to C-terminus: Large ribosomal subunit protein uL13 (145 aa).

It belongs to the universal ribosomal protein uL13 family. In terms of assembly, part of the 50S ribosomal subunit.

Its function is as follows. This protein is one of the early assembly proteins of the 50S ribosomal subunit, although it is not seen to bind rRNA by itself. It is important during the early stages of 50S assembly. This Geobacillus sp. (strain WCH70) protein is Large ribosomal subunit protein uL13.